Here is a 328-residue protein sequence, read N- to C-terminus: Cytochrome c biogenesis protein CcsA (328 aa).

8 helical membrane-spanning segments follow: residues 13–33 (ISFS…LVNL), 46–66 (GIVI…IYSG), 73–93 (LYES…ISYF), 101–121 (LNAI…SGLL), 146–166 (MILG…LLVI), 234–254 (IISL…VWAN), 263–283 (WDPK…FLHI), and 295–315 (AIVA…VNLL).

Belongs to the CcmF/CycK/Ccl1/NrfE/CcsA family. In terms of assembly, may interact with Ccs1.

The protein localises to the plastid. It localises to the chloroplast thylakoid membrane. Its function is as follows. Required during biogenesis of c-type cytochromes (cytochrome c6 and cytochrome f) at the step of heme attachment. This Arabis hirsuta (Hairy rock-cress) protein is Cytochrome c biogenesis protein CcsA.